The primary structure comprises 340 residues: Holliday junction branch migration complex subunit RuvB (340 aa).

The tract at residues 1-184 (MNENLDPTNQ…FGIQSRLQYY (184 aa)) is large ATPase domain (RuvB-L). ATP is bound by residues Leu23, Arg24, Gly65, Lys68, Thr69, Thr70, 131 to 133 (EDF), Arg174, Tyr184, and Arg221. Thr69 serves as a coordination point for Mg(2+). The small ATPAse domain (RuvB-S) stretch occupies residues 185–255 (NAELLTTIVQ…IAKFALNALH (71 aa)). The segment at 258–340 (AHGLDEMDNK…VKANVQGGLF (83 aa)) is head domain (RuvB-H). DNA is bound by residues Arg313 and Arg318.

It belongs to the RuvB family. As to quaternary structure, homohexamer. Forms an RuvA(8)-RuvB(12)-Holliday junction (HJ) complex. HJ DNA is sandwiched between 2 RuvA tetramers; dsDNA enters through RuvA and exits via RuvB. An RuvB hexamer assembles on each DNA strand where it exits the tetramer. Each RuvB hexamer is contacted by two RuvA subunits (via domain III) on 2 adjacent RuvB subunits; this complex drives branch migration. In the full resolvosome a probable DNA-RuvA(4)-RuvB(12)-RuvC(2) complex forms which resolves the HJ.

It is found in the cytoplasm. It carries out the reaction ATP + H2O = ADP + phosphate + H(+). The RuvA-RuvB-RuvC complex processes Holliday junction (HJ) DNA during genetic recombination and DNA repair, while the RuvA-RuvB complex plays an important role in the rescue of blocked DNA replication forks via replication fork reversal (RFR). RuvA specifically binds to HJ cruciform DNA, conferring on it an open structure. The RuvB hexamer acts as an ATP-dependent pump, pulling dsDNA into and through the RuvAB complex. RuvB forms 2 homohexamers on either side of HJ DNA bound by 1 or 2 RuvA tetramers; 4 subunits per hexamer contact DNA at a time. Coordinated motions by a converter formed by DNA-disengaged RuvB subunits stimulates ATP hydrolysis and nucleotide exchange. Immobilization of the converter enables RuvB to convert the ATP-contained energy into a lever motion, pulling 2 nucleotides of DNA out of the RuvA tetramer per ATP hydrolyzed, thus driving DNA branch migration. The RuvB motors rotate together with the DNA substrate, which together with the progressing nucleotide cycle form the mechanistic basis for DNA recombination by continuous HJ branch migration. Branch migration allows RuvC to scan DNA until it finds its consensus sequence, where it cleaves and resolves cruciform DNA. The polypeptide is Holliday junction branch migration complex subunit RuvB (Flavobacterium psychrophilum (strain ATCC 49511 / DSM 21280 / CIP 103535 / JIP02/86)).